Reading from the N-terminus, the 1854-residue chain is Protein virilizer (1854 aa).

S186 carries the phosphoserine modification. Composition is skewed to basic and acidic residues over residues 202–214 (YHQH…QREM) and 236–259 (THSE…DWSR). Disordered stretches follow at residues 202–361 (YHQH…EIIG), 777–821 (NPEE…GKPV), 1570–1589 (TSTE…ASSC), 1720–1788 (VRGR…NRGS), and 1804–1854 (IGSP…SYLR). A phosphoserine mark is found at S258, S260, and S276. The segment covering 275–285 (RSRSVVDEHKW) has biased composition (basic and acidic residues). T288 is subject to Phosphothreonine. S295 is modified (phosphoserine). T297 bears the Phosphothreonine mark. S301 and S312 each carry phosphoserine. 2 stretches are compositionally biased toward basic and acidic residues: residues 325-343 (HSSE…EDRS) and 777-796 (NPEE…KAME). The stretch at 779 to 808 (EEKEEKAEKSDAEDKAMEVENEAVEAGGEK) forms a coiled coil. Composition is skewed to low complexity over residues 1738-1748 (SRPPNTSRPPS) and 1816-1838 (SYRS…PHYS).

It belongs to the vir family. In terms of assembly, component of the WMM complex, a N6-methyltransferase complex composed of a catalytic subcomplex, named MAC, and of an associated subcomplex, named MACOM. The MAC subcomplex is composed of Ime4/Mettl3 and Mettl14. The MACOM subcomplex is composed of fl(2)d, Flacc/Xio, Hakai, vir, and, in some cases of nito. Part of a complex containing fl(2)d, Sxl and vir.

It is found in the nucleus. In terms of biological role, associated component of the WMM complex, a complex that mediates N6-methyladenosine (m6A) methylation of mRNAs, a modification that plays a role in the efficiency of mRNA splicing and is required for sex determination. Required for sex determination and dosage compensation via Sxl alternative splicing: m6A methylation acts as a key regulator of Sxl pre-mRNA and promotes female-specific alternative splicing of Sxl, which determines female physiognomy. M6A methylation is also required for neuronal functions. Required for proper inclusion of regulated exons in Ubx transcripts, leading to isoforms Ia/b and IIa/b. This chain is Protein virilizer, found in Drosophila melanogaster (Fruit fly).